The chain runs to 299 residues: GTPase Era (299 aa).

The Era-type G domain maps to 4-171; the sequence is KSGFVAILGR…MEILKENLDE (168 aa). Residues 12 to 19 are G1; that stretch reads GRPNVGKS. 12–19 is a binding site for GTP; it reads GRPNVGKS. The interval 38–42 is G2; the sequence is QTTRN. A G3 region spans residues 59–62; it reads DTPG. Residues 59 to 63 and 121 to 124 contribute to the GTP site; these read DTPGI and NKID. A G4 region spans residues 121 to 124; it reads NKID. The interval 150 to 152 is G5; the sequence is ISA. In terms of domain architecture, KH type-2 spans 202-280; that stretch reads TREEIPHSVA…FLETWVKVKK (79 aa).

It belongs to the TRAFAC class TrmE-Era-EngA-EngB-Septin-like GTPase superfamily. Era GTPase family. As to quaternary structure, monomer.

The protein resides in the cytoplasm. It localises to the cell membrane. An essential GTPase that binds both GDP and GTP, with rapid nucleotide exchange. Plays a role in 16S rRNA processing and 30S ribosomal subunit biogenesis and possibly also in cell cycle regulation and energy metabolism. The sequence is that of GTPase Era from Streptococcus suis (strain 98HAH33).